The chain runs to 185 residues: Ribosome-recycling factor (185 aa).

Belongs to the RRF family.

It localises to the cytoplasm. In terms of biological role, responsible for the release of ribosomes from messenger RNA at the termination of protein biosynthesis. May increase the efficiency of translation by recycling ribosomes from one round of translation to another. This chain is Ribosome-recycling factor, found in Shewanella loihica (strain ATCC BAA-1088 / PV-4).